The chain runs to 226 residues: Enolase-phosphatase E1 (226 aa).

The protein belongs to the HAD-like hydrolase superfamily. MasA/MtnC family. Monomer. Mg(2+) serves as cofactor.

The enzyme catalyses 5-methylsulfanyl-2,3-dioxopentyl phosphate + H2O = 1,2-dihydroxy-5-(methylsulfanyl)pent-1-en-3-one + phosphate. It participates in amino-acid biosynthesis; L-methionine biosynthesis via salvage pathway; L-methionine from S-methyl-5-thio-alpha-D-ribose 1-phosphate: step 3/6. The protein operates within amino-acid biosynthesis; L-methionine biosynthesis via salvage pathway; L-methionine from S-methyl-5-thio-alpha-D-ribose 1-phosphate: step 4/6. Its function is as follows. Bifunctional enzyme that catalyzes the enolization of 2,3-diketo-5-methylthiopentyl-1-phosphate (DK-MTP-1-P) into the intermediate 2-hydroxy-3-keto-5-methylthiopentenyl-1-phosphate (HK-MTPenyl-1-P), which is then dephosphorylated to form the acireductone 1,2-dihydroxy-3-keto-5-methylthiopentene (DHK-MTPene). The sequence is that of Enolase-phosphatase E1 from Alcanivorax borkumensis (strain ATCC 700651 / DSM 11573 / NCIMB 13689 / SK2).